Reading from the N-terminus, the 227-residue chain is Isopentenyl-diphosphate Delta-isomerase 1 (227 aa).

K36 provides a ligand contact to substrate. H40 and H51 together coordinate Mg(2+). A Nudix hydrolase domain is found at 49–199 (LLHRAFSVFL…EIKITPWFKI (151 aa)). Substrate is bound by residues R70 and K74. C86 is an active-site residue. S87 provides a ligand contact to substrate. E146 and E148 together coordinate Mg(2+). E148 is an active-site residue. K176 carries the N6-acetyllysine modification. A Microbody targeting signal motif is present at residues 225 to 227 (YRI).

It belongs to the IPP isomerase type 1 family. In terms of assembly, monomer. Mg(2+) serves as cofactor.

The protein localises to the peroxisome. The catalysed reaction is isopentenyl diphosphate = dimethylallyl diphosphate. It functions in the pathway isoprenoid biosynthesis; dimethylallyl diphosphate biosynthesis; dimethylallyl diphosphate from isopentenyl diphosphate: step 1/1. Catalyzes the 1,3-allylic rearrangement of the homoallylic substrate isopentenyl (IPP) to its highly electrophilic allylic isomer, dimethylallyl diphosphate (DMAPP). In Pongo abelii (Sumatran orangutan), this protein is Isopentenyl-diphosphate Delta-isomerase 1 (IDI1).